The following is a 438-amino-acid chain: sn-glycerol-3-phosphate-binding periplasmic protein UgpB (438 aa).

An N-terminal signal peptide occupies residues methionine 1 to alanine 23. The sn-glycerol 3-phosphate site is built by tyrosine 65, glutamate 89, serine 144, serine 270, glycine 307, tyrosine 346, and arginine 397.

It belongs to the bacterial solute-binding protein 1 family. In terms of assembly, the complex is composed of two ATP-binding proteins (UgpC), two transmembrane proteins (UgpA and UgpE) and a solute-binding protein (UgpB).

The protein resides in the periplasm. Functionally, part of the ABC transporter complex UgpBAEC involved in sn-glycerol-3-phosphate (G3P) import. Binds G3P. This is sn-glycerol-3-phosphate-binding periplasmic protein UgpB (ugpB) from Salmonella typhi.